The sequence spans 149 residues: Deoxyuridine 5'-triphosphate nucleotidohydrolase (149 aa).

Residues arginine 68–glycine 70, asparagine 81, threonine 85–aspartate 87, and lysine 95 each bind substrate.

Belongs to the dUTPase family. The cofactor is Mg(2+).

The enzyme catalyses dUTP + H2O = dUMP + diphosphate + H(+). The protein operates within pyrimidine metabolism; dUMP biosynthesis; dUMP from dCTP (dUTP route): step 2/2. Its function is as follows. This enzyme is involved in nucleotide metabolism: it produces dUMP, the immediate precursor of thymidine nucleotides and it decreases the intracellular concentration of dUTP so that uracil cannot be incorporated into DNA. This Bdellovibrio bacteriovorus (strain ATCC 15356 / DSM 50701 / NCIMB 9529 / HD100) protein is Deoxyuridine 5'-triphosphate nucleotidohydrolase.